The chain runs to 262 residues: Polyamine aminopropyltransferase (262 aa).

One can recognise a PABS domain in the interval 1-249 (MWITQEITPY…DIHRAAFALP (249 aa)). Asn29 contacts S-methyl-5'-thioadenosine. Asp83 serves as a coordination point for spermidine. Asp155 functions as the Proton acceptor in the catalytic mechanism.

This sequence belongs to the spermidine/spermine synthase family. As to quaternary structure, homodimer or homotetramer.

It is found in the cytoplasm. The enzyme catalyses S-adenosyl 3-(methylsulfanyl)propylamine + putrescine = S-methyl-5'-thioadenosine + spermidine + H(+). It functions in the pathway amine and polyamine biosynthesis; spermidine biosynthesis; spermidine from putrescine: step 1/1. Its function is as follows. Catalyzes the irreversible transfer of a propylamine group from the amino donor S-adenosylmethioninamine (decarboxy-AdoMet) to putrescine (1,4-diaminobutane) to yield spermidine. The sequence is that of Polyamine aminopropyltransferase from Helicobacter acinonychis (strain Sheeba).